Reading from the N-terminus, the 74-residue chain is Cytochrome c oxidase subunit 6C (74 aa).

Residues 2–12 lie on the Mitochondrial matrix side of the membrane; sequence STALAKPQMRG. Residues 13–53 form a helical membrane-spanning segment; that stretch reads LLARRLRFHIVGAFMVSLGFATFYKFAVAEKRKKAYADFYR. Over 54 to 74 the chain is Mitochondrial intermembrane; that stretch reads NYDSMKDFEEMRKAGIFQSAK.

This sequence belongs to the cytochrome c oxidase subunit 6c family. As to quaternary structure, component of the cytochrome c oxidase (complex IV, CIV), a multisubunit enzyme composed of 14 subunits. The complex is composed of a catalytic core of 3 subunits MT-CO1, MT-CO2 and MT-CO3, encoded in the mitochondrial DNA, and 11 supernumerary subunits COX4I1 (or COX4I2), COX5A, COX5B, COX6A2 (or COX6A1), COX6B1 (or COX6B2), COX6C, COX7A1 (or COX7A2), COX7B, COX7C, COX8B and NDUFA4, which are encoded in the nuclear genome. The complex exists as a monomer or a dimer and forms supercomplexes (SCs) in the inner mitochondrial membrane with NADH-ubiquinone oxidoreductase (complex I, CI) and ubiquinol-cytochrome c oxidoreductase (cytochrome b-c1 complex, complex III, CIII), resulting in different assemblies (supercomplex SCI(1)III(2)IV(1) and megacomplex MCI(2)III(2)IV(2)).

It localises to the mitochondrion inner membrane. It functions in the pathway energy metabolism; oxidative phosphorylation. Its function is as follows. Component of the cytochrome c oxidase, the last enzyme in the mitochondrial electron transport chain which drives oxidative phosphorylation. The respiratory chain contains 3 multisubunit complexes succinate dehydrogenase (complex II, CII), ubiquinol-cytochrome c oxidoreductase (cytochrome b-c1 complex, complex III, CIII) and cytochrome c oxidase (complex IV, CIV), that cooperate to transfer electrons derived from NADH and succinate to molecular oxygen, creating an electrochemical gradient over the inner membrane that drives transmembrane transport and the ATP synthase. Cytochrome c oxidase is the component of the respiratory chain that catalyzes the reduction of oxygen to water. Electrons originating from reduced cytochrome c in the intermembrane space (IMS) are transferred via the dinuclear copper A center (CU(A)) of subunit 2 and heme A of subunit 1 to the active site in subunit 1, a binuclear center (BNC) formed by heme A3 and copper B (CU(B)). The BNC reduces molecular oxygen to 2 water molecules using 4 electrons from cytochrome c in the IMS and 4 protons from the mitochondrial matrix. In Bos taurus (Bovine), this protein is Cytochrome c oxidase subunit 6C (COX6C).